A 283-amino-acid polypeptide reads, in one-letter code: MEAVHCFRCYKFPSKQIEFYLTNCMHMFCIECERLCHPPEEEPLKCIQCSKTPIRIVKMGPELPMTIKSMFTPISEEINQYTRDLTRVLTFQHRQRASLSTFLERKVAAFDRLRDAYSEEKTKKEHYKKQLEEAYHLLKSKEHEISKLKKQLAEQAPPPQTPPRSNSLKVASSRSLETPSMMRVFSDSMYETPVQIQRRFTKAQAKAEAEAEAPAKSPGSKAQTTKCTSNYQSHPPASFETPIHHPPKTSMGFTTPANPPHMFPYLKKHEAQREKHKEHRNSQ.

The segment at 6 to 50 (CFRCYKFPSKQIEFYLTNCMHMFCIECERLCHPPEEEPLKCIQCS) adopts an RING-type zinc-finger fold. 2 disordered regions span residues 149-175 (KKQL…SSRS) and 201-283 (TKAQ…RNSQ). Positions 163 to 175 (PRSNSLKVASSRS) are enriched in polar residues. The span at 202–216 (KAQAKAEAEAEAPAK) shows a compositional bias: low complexity. Positions 220–235 (SKAQTTKCTSNYQSHP) are enriched in polar residues. The span at 267-283 (KKHEAQREKHKEHRNSQ) shows a compositional bias: basic and acidic residues.

In terms of assembly, interacts with zhp-3; the interaction is required for their localization along paired chromosomes and stability, and for the formation of chiasma during meiotic recombination. As to expression, expressed in the germline.

It is found in the chromosome. Its function is as follows. Recruited co-dependently with zhp-3 to the synaptonemal complex between homologous chromosome pairs to regulate the formation and number of crossover events between homologs during meiotic recombination. In the early stages of pachytene, in complex with zhp-4, recruited by the zhp-1-zhp-2 heterodimer to designated crossover sites along the recombination intermediate to stabilize other pro-crossover factors such as rmh-1, msh-5 and cosa-1. This in turn facilitates crossover and promotes the formation of chiasma in each meiotic nucleus at the late pachytene stage of meiosis. Negatively regulates double strand break formation to promote formation of the crossover intermediate. The polypeptide is Zip homologous protein 4 (Caenorhabditis elegans).